Here is a 526-residue protein sequence, read N- to C-terminus: Chaperonin GroEL 2 (526 aa).

ATP-binding residues include lysine 50, glycine 413, and aspartate 494.

It belongs to the chaperonin (HSP60) family. As to quaternary structure, forms a cylinder of 14 subunits composed of two heptameric rings stacked back-to-back. Interacts with the co-chaperonin GroES.

The protein localises to the cytoplasm. It carries out the reaction ATP + H2O + a folded polypeptide = ADP + phosphate + an unfolded polypeptide.. Its function is as follows. Together with its co-chaperonin GroES, plays an essential role in assisting protein folding. The GroEL-GroES system forms a nano-cage that allows encapsulation of the non-native substrate proteins and provides a physical environment optimized to promote and accelerate protein folding. This chain is Chaperonin GroEL 2, found in Chlamydia pneumoniae (Chlamydophila pneumoniae).